A 201-amino-acid polypeptide reads, in one-letter code: Imidazoleglycerol-phosphate dehydratase (201 aa).

It belongs to the imidazoleglycerol-phosphate dehydratase family.

It is found in the cytoplasm. The enzyme catalyses D-erythro-1-(imidazol-4-yl)glycerol 3-phosphate = 3-(imidazol-4-yl)-2-oxopropyl phosphate + H2O. It participates in amino-acid biosynthesis; L-histidine biosynthesis; L-histidine from 5-phospho-alpha-D-ribose 1-diphosphate: step 6/9. This Prochlorococcus marinus (strain MIT 9515) protein is Imidazoleglycerol-phosphate dehydratase.